The sequence spans 432 residues: Proteinase-activated receptor 1 (432 aa).

The N-terminal stretch at 1–21 is a signal peptide; sequence MGPRRLLLVAVGLSLCGPLLS. Positions 22-45 are cleaved as a propeptide — removed for receptor activation; it reads SRVPMRQPESERMYATPYATPNPR. Over 46-109 the chain is Extracellular; sequence SFFLRNPSED…SGYLTSPWLT (64 aa). 2 N-linked (GlcNAc...) asparagine glycosylation sites follow: Asn-69 and Asn-82. The chain crosses the membrane as a helical span at residues 110-135; that stretch reads LFIPSVYTFVFIVSLPLNILAIAVFV. Over 136–144 the chain is Cytoplasmic; the sequence is FRMKVKKPA. The chain crosses the membrane as a helical span at residues 145–164; that stretch reads VVYMLHLAMADVLFVSVLPF. Topologically, residues 165-183 are extracellular; it reads KISYYFSGTDWQFGSGMCR. Cys-182 and Cys-261 are joined by a disulfide. A helical transmembrane segment spans residues 184–205; sequence FATAACYCNMYASIMLMTVISI. At 206–225 the chain is on the cytoplasmic side; it reads DRFLAVVYPIQSLSWRTLGR. The helical transmembrane segment at 226–246 threads the bilayer; that stretch reads ANFTCVVIWVMAIMGVVPLLL. Residues 247-275 are Extracellular-facing; it reads KEQTTQVPGLNITTCHDVLNETLLHGFYS. N-linked (GlcNAc...) asparagine glycosylation is found at Asn-257 and Asn-266. Residues 276–295 traverse the membrane as a helical segment; it reads YYFSAFSAIFFLVPLIISTV. At 296–318 the chain is on the cytoplasmic side; the sequence is CYTSIIRCLSSSAVANRSKKSRA. Residues 319 to 341 form a helical membrane-spanning segment; it reads LFLSAAVFCIFIVCFGPTNVLLI. Over 342–357 the chain is Extracellular; it reads VHYLLLSDSPGTETAY. Residues 358–381 form a helical membrane-spanning segment; that stretch reads FAYLLCVCVTSVASCIDPLIYYYA. The Cytoplasmic portion of the chain corresponds to 382-432; it reads SSECQKHLYSILCCRESSDSNSCNSTGQLMPSKMDTCSSHLNNSIYKKLLA. Ser-425 bears the Phosphoserine mark.

It belongs to the G-protein coupled receptor 1 family. Proteolytic cleavage by thrombin generates a new N-terminus that functions as a tethered ligand. Also proteolytically cleaved by cathepsin CTSG. In terms of processing, phosphorylated in the C-terminal tail; probably mediating desensitization prior to the uncoupling and internalization of the receptor. As to expression, expressed in primary cultured oligodendrocytes.

It is found in the cell membrane. High affinity receptor that binds the activated thrombin, leading to calcium release from intracellular stores. The thrombin-activated receptor signaling pathway is mediated through PTX-insensitive G proteins, activation of phospholipase C resulting in the production of 1D-myo-inositol 1,4,5-trisphosphate (InsP3) which binds to InsP3 receptors causing calcium release from the stores. In astrocytes, the calcium released into the cytosol allows the Ca(2+)-dependent release of L-glutamate into the synaptic cleft through BEST1, that targets the neuronal postsynaptic GRIN2A/NMDAR receptor resulting in the synaptic plasticity regulation. May play a role in platelets activation and in vascular development. Mediates up-regulation of pro-inflammatory cytokines, such as MCP-1/CCL2 and IL6, triggered by coagulation factor Xa (F10) in cardiac fibroblasts and umbilical vein endothelial cells. The chain is Proteinase-activated receptor 1 from Rattus norvegicus (Rat).